We begin with the raw amino-acid sequence, 540 residues long: PTS system alpha-glucoside-specific EIICB component (540 aa).

The 420-residue stretch at 1–420 (MLSQIQRFGG…LNLKTPGREE (420 aa)) folds into the PTS EIIC type-1 domain. A run of 11 helical transmembrane segments spans residues 12 to 32 (MFTP…AIML), 87 to 107 (ACLA…AMGM), 130 to 150 (IAGI…SGLV), 174 to 194 (FVVI…LLGW), 201 to 221 (IESL…VYIF), 225 to 245 (ILIP…GPAV), 277 to 297 (FALH…ALYF), 307 to 327 (VAGL…TEPL), 329 to 349 (FTFL…AATM), 352 to 372 (VMYI…QFLP), and 384 to 404 (SMMF…FVVF). A PTS EIIB type-1 domain is found at 448–530 (LGQAAGFLQA…ENLMKDSLST (83 aa)). C470 serves as the catalytic Phosphocysteine intermediate; for EIIB activity.

Its subcellular location is the cell membrane. In terms of biological role, the phosphoenolpyruvate-dependent sugar phosphotransferase system (sugar PTS), a major carbohydrate active -transport system, catalyzes the phosphorylation of incoming sugar substrates concomitantly with their translocation across the cell membrane. This system is involved in alpha-glucoside transport. Involved in the transport and simultaneous phosphorylation at O-6 of the glucosyl moiety of sucrose and its five linkage-isomeric alpha-D-glucosyl-D-fructoses. Can also transport maltose, isomaltose and maltitol, phosphorylating at O-6 of their non-reducing glucose portion. This chain is PTS system alpha-glucoside-specific EIICB component (aglA), found in Klebsiella pneumoniae.